The primary structure comprises 336 residues: ATP-dependent 6-phosphofructokinase 3 (336 aa).

ATP contacts are provided by residues Gly10, 72–73 (RE), and 108–111 (GNGT). Asn109 serves as a coordination point for Mg(2+). Residues 131–133 (TID), Arg168, 175–177 (MGH), Glu228, Arg255, and 261–264 (YIQR) each bind substrate. Asp133 serves as the catalytic Proton acceptor.

The protein belongs to the phosphofructokinase type A (PFKA) family. Mixed-substrate PFK group III subfamily. In terms of assembly, homodimer or homotetramer. Mg(2+) serves as cofactor.

It localises to the cytoplasm. It carries out the reaction beta-D-fructose 6-phosphate + ATP = beta-D-fructose 1,6-bisphosphate + ADP + H(+). It functions in the pathway carbohydrate degradation; glycolysis; D-glyceraldehyde 3-phosphate and glycerone phosphate from D-glucose: step 3/4. In terms of biological role, catalyzes the phosphorylation of D-fructose 6-phosphate to fructose 1,6-bisphosphate by ATP, the first committing step of glycolysis. The polypeptide is ATP-dependent 6-phosphofructokinase 3 (Bacteroides thetaiotaomicron (strain ATCC 29148 / DSM 2079 / JCM 5827 / CCUG 10774 / NCTC 10582 / VPI-5482 / E50)).